The sequence spans 30 residues: Cyclotide hyen-K (30 aa).

Positions 1–30 form a cross-link, cyclopeptide (Gly-Asn); the sequence is GIPCGESCIFIPCITTVVGCSCSNKVCYDN. 3 disulfide bridges follow: Cys-4-Cys-20, Cys-8-Cys-22, and Cys-13-Cys-27.

Post-translationally, this is a cyclic peptide. In terms of tissue distribution, detected in seeds (at protein level).

In terms of biological role, probably participates in a plant defense mechanism. The polypeptide is Cyclotide hyen-K (Pigea enneasperma (Spade flower)).